Consider the following 468-residue polypeptide: UDP-N-acetylmuramate--L-alanine ligase (468 aa).

112-118 is an ATP binding site; that stretch reads GMHGKTT.

It belongs to the MurCDEF family.

Its subcellular location is the cytoplasm. The enzyme catalyses UDP-N-acetyl-alpha-D-muramate + L-alanine + ATP = UDP-N-acetyl-alpha-D-muramoyl-L-alanine + ADP + phosphate + H(+). The protein operates within cell wall biogenesis; peptidoglycan biosynthesis. Cell wall formation. This Koribacter versatilis (strain Ellin345) protein is UDP-N-acetylmuramate--L-alanine ligase.